A 322-amino-acid polypeptide reads, in one-letter code: Dirigent protein 9 (322 aa).

Residues 1-20 (MAKALHITIFLFLISSNLLA) form the signal peptide.

This sequence belongs to the plant dirigent protein family. As to quaternary structure, homodimer.

It is found in the secreted. It localises to the extracellular space. The protein resides in the apoplast. Its function is as follows. Dirigent proteins impart stereoselectivity on the phenoxy radical-coupling reaction, yielding optically active lignans from two molecules of coniferyl alcohol in the biosynthesis of lignans, flavonolignans, and alkaloids and thus plays a central role in plant secondary metabolism. The protein is Dirigent protein 9 (DIR9) of Arabidopsis thaliana (Mouse-ear cress).